A 298-amino-acid chain; its full sequence is Protein pxr1 (298 aa).

Residues 1–11 (MGLAAPRKRTK) are compositionally biased toward basic residues. The interval 1–23 (MGLAAPRKRTKISHDPNNTNWAR) is disordered. A G-patch domain is found at 25–79 (TSGFGHKILSSQGWTPGSFLGARDAAHADMFTAASAGHIRVVVKDDTLGLGARAG). The segment at 145–274 (LPERESVQQS…RPLGRQIVRG (130 aa)) is disordered. Residues 151–164 (VQQSRAAVETSDSN) are compositionally biased toward polar residues. Over residues 199 to 222 (REKKEKKDKKEKKEKKDKKDKKRK) the composition is skewed to basic residues. Over residues 247 to 256 (GLESDSTSVS) the composition is skewed to polar residues.

Belongs to the PINX1 family.

It is found in the nucleus. It localises to the nucleolus. Involved in rRNA-processing at A0, A1 and A2 sites and negatively regulates telomerase. The chain is Protein pxr1 (pxr1) from Aspergillus terreus (strain NIH 2624 / FGSC A1156).